We begin with the raw amino-acid sequence, 65 residues long: Metallothionein-B (65 aa).

Belongs to the metallothionein superfamily. Type 4 family.

In terms of biological role, metallothioneins have a high content of cysteine residues that bind various heavy metals. This Strongylocentrotus purpuratus (Purple sea urchin) protein is Metallothionein-B (MTB1).